Reading from the N-terminus, the 124-residue chain is MKLSALVFVASVMLVAASPVKDVEEPVETHLAADLKTIEELAKYEEAAVQKRSCIVGSKNIGETCVASCQCCGATVRCIGEGTKGICNNYQTNNILGQILLYAKDTVVNTAGLLVCAQDLSEYE.

Residues 1 to 17 (MKLSALVFVASVMLVAA) form the signal peptide. Positions 18 to 52 (SPVKDVEEPVETHLAADLKTIEELAKYEEAAVQKR) are excised as a propeptide. 4 disulfides stabilise this stretch: Cys-54–Cys-72, Cys-65–Cys-78, Cys-69–Cys-116, and Cys-71–Cys-87.

Expressed by the venom gland.

The protein localises to the secreted. Functionally, no toxicity is observed upon intracranial injection into mice and intrathorax injection into crickets. The chain is U13-hexatoxin-Mg1a from Macrothele gigas (Japanese funnel web spider).